The following is a 454-amino-acid chain: MNNSLWQQCAERLQSELPLQQFNTWIRPLQAKLNGETLTLFAPNIYSVDWVRDKYLKTINTYLEALCDDKVPNVVLKVGEASPTQRDSGSPQRAAATRRKTPNFSSGNTDVEVPFESNIHPEYTFDNFVEGKSNQLARAAAIQVAENPGGVYNPLFVYGGTGLGKTHLLHAVGNGIMAHKKDAKVFYIRAERFVQDMVNSIRNSSTNEFKRYYRSVDALLIDDIHFFANKKGSQEEFFHTFNALLEGNQQIIMTSDLYPKEIDGVEDRLKSRFGWGLTIAIEPPELETRVAILMRKADERGLHMPHEVAFFIAKRLRSNVRELEGALNRVVANVQLTGRPITIDFVREALRDLIAAQEKLVTIDNIQKTVAEYYNIKLADILSKRRSRSVARPRQLAMALAKELTNHSLPEIGDAFGGRDHTTVLHACRKIQELKDAQHDIKEDYRNLIRTLSS.

The segment at methionine 1–alanine 81 is domain I, interacts with DnaA modulators. The interval glycine 79–aspartate 110 is disordered. The tract at residues alanine 81 to serine 117 is domain II. Residues serine 82–proline 91 are compositionally biased toward polar residues. Residues asparagine 118–valine 334 are domain III, AAA+ region. Glycine 162, glycine 164, lysine 165, and threonine 166 together coordinate ATP. The tract at residues glutamine 335 to serine 454 is domain IV, binds dsDNA.

This sequence belongs to the DnaA family. In terms of assembly, oligomerizes as a right-handed, spiral filament on DNA at oriC.

It is found in the cytoplasm. Its function is as follows. Plays an essential role in the initiation and regulation of chromosomal replication. ATP-DnaA binds to the origin of replication (oriC) to initiate formation of the DNA replication initiation complex once per cell cycle. Binds the DnaA box (a 9 base pair repeat at the origin) and separates the double-stranded (ds)DNA. Forms a right-handed helical filament on oriC DNA; dsDNA binds to the exterior of the filament while single-stranded (ss)DNA is stabiized in the filament's interior. The ATP-DnaA-oriC complex binds and stabilizes one strand of the AT-rich DNA unwinding element (DUE), permitting loading of DNA polymerase. After initiation quickly degrades to an ADP-DnaA complex that is not apt for DNA replication. Binds acidic phospholipids. This Idiomarina loihiensis (strain ATCC BAA-735 / DSM 15497 / L2-TR) protein is Chromosomal replication initiator protein DnaA.